We begin with the raw amino-acid sequence, 740 residues long: N-acetylated-alpha-linked acidic dipeptidase 2 (740 aa).

The Cytoplasmic portion of the chain corresponds to 1–7 (MARPRHL). A helical; Signal-anchor for type II membrane protein transmembrane segment spans residues 8 to 31 (RGLGMCITAVLASFIAGFTVGWFI). Residues 32 to 740 (KPLKETTTSA…AAAGTLTNVL (709 aa)) lie on the Extracellular side of the membrane. N-linked (GlcNAc...) asparagine glycans are attached at residues Asn-111, Asn-143, and Asn-185. Arg-200 and Asn-247 together coordinate substrate. 2 residues coordinate Ca(2+): Thr-259 and Tyr-262. Positions 264–577 (AKEYTFRLPV…QLRGALVYEL (314 aa)) are NAALADase. Asn-314 is a glycosylation site (N-linked (GlcNAc...) asparagine). Positions 367 and 377 each coordinate Zn(2+). Glu-414 contributes to the substrate binding site. Glu-414 (nucleophile; for NAALADase activity) is an active-site residue. Glu-415 is a binding site for Zn(2+). Residues Glu-423 and Glu-426 each contribute to the Ca(2+) site. Zn(2+) is bound at residue Asp-443. An N-linked (GlcNAc...) asparagine glycan is attached at Asn-449. Substrate-binding positions include 507–508 (SG), 524–526 (RAR), Tyr-542, and 542–543 (YH). His-543 provides a ligand contact to Zn(2+). Residue Asn-603 is glycosylated (N-linked (GlcNAc...) asparagine). Ser-618 functions as the Charge relay system in the catalytic mechanism. Asn-628 carries an N-linked (GlcNAc...) asparagine glycan. Residues Asp-656 and His-679 each act as charge relay system in the active site. 689–690 (KY) lines the substrate pocket.

It belongs to the peptidase M28 family. M28B subfamily. In terms of assembly, homodimer. Requires Zn(2+) as cofactor. As to expression, expressed ovary, testes and lung, but not brain.

The protein resides in the cell membrane. The catalysed reaction is Release of an unsubstituted, C-terminal glutamyl residue, typically from Ac-Asp-Glu or folylpoly-gamma-glutamates.. Has N-acetylated-alpha-linked-acidic dipeptidase (NAALADase) activity. Also exhibits a dipeptidyl-peptidase IV type activity. Inactivates the peptide neurotransmitter N-acetylaspartylglutamate. The chain is N-acetylated-alpha-linked acidic dipeptidase 2 (Naalad2) from Mus musculus (Mouse).